The sequence spans 1104 residues: Translation initiation factor IF-2 (1104 aa).

2 disordered regions span residues 51 to 444 (SLLG…LAAQ) and 461 to 497 (LARPAKPKSQQRTAPKPVAAMRKRKKETARQRQRRRA). Composition is skewed to low complexity over residues 60 to 119 (AKPA…KPQA) and 127 to 164 (ATPKPVISKPAPALVKAAAAPARPTAAKPVPRPAAAKP). Over residues 189-202 (APTPRPTPARPTPR) the composition is skewed to pro residues. 4 stretches are compositionally biased toward low complexity: residues 203–215 (PAGAGSPARPTPG), 227–246 (GAPSRPGAPTRAGAPAKPGA), 311–336 (STTGSGRPGAPTRPGAPGRPGMPAGM), and 366–396 (PTKAGAGAGTATPPVARPNSPSAPRRPSFRP). A compositionally biased stretch (basic and acidic residues) spans 406–420 (GRPDWDDSARLDALR). Basic residues predominate over residues 481-495 (MRKRKKETARQRQRR). Positions 596 to 768 (RRPPVVTVMG…LLLVTEVEDL (173 aa)) constitute a tr-type G domain. The segment at 605–612 (GHVDHGKT) is G1. Position 605 to 612 (605 to 612 (GHVDHGKT)) interacts with GTP. The tract at residues 630–634 (GITQH) is G2. The tract at residues 655–658 (DTPG) is G3. GTP is bound by residues 655-659 (DTPGH) and 709-712 (NKID). The segment at 709–712 (NKID) is G4. The segment at 745 to 747 (SAI) is G5.

This sequence belongs to the TRAFAC class translation factor GTPase superfamily. Classic translation factor GTPase family. IF-2 subfamily.

It localises to the cytoplasm. One of the essential components for the initiation of protein synthesis. Protects formylmethionyl-tRNA from spontaneous hydrolysis and promotes its binding to the 30S ribosomal subunits. Also involved in the hydrolysis of GTP during the formation of the 70S ribosomal complex. In Synechococcus sp. (strain CC9605), this protein is Translation initiation factor IF-2.